Consider the following 453-residue polypeptide: Putative long chain fatty acid-CoA ligase VraA (453 aa).

Belongs to the ATP-dependent AMP-binding enzyme family.

The polypeptide is Putative long chain fatty acid-CoA ligase VraA (vraA) (Staphylococcus epidermidis (strain ATCC 35984 / DSM 28319 / BCRC 17069 / CCUG 31568 / BM 3577 / RP62A)).